The chain runs to 447 residues: MTAHEVNFDGLVGLTHHYAGLSFGNEASTRHRFQVSNPRLAVKQGLLKMKALADAGFPQAVIPPHERPFIPALRQLGFTGSDEQILDKVARQAPRWLSSVSSASPMWVANAATVCPSADALDGKVHLTVANLNNKFHRALEAPVTEALLRAIFRDESQFSVHSALPQVALLGDEGAANHNRLGGEYGSAGVQLFVYGREEENEIRPARYPARQSREASEAVARLNQVNPQQVIFAQQNPEVIDQGVFHNDVIAVSNRQVLFCHEAAFARQKVLINQLRTRVDGFMAIEVPAGEVSVSDAVATYLFNSQLLSRNDGSMLLVLPRECQDHAGVWRYLNKLVAEDNPISAMQVFDLRESMANGGGPACLRLRVVLTEEERRAVNPAVMMNDALFTALNAWADRYYRDRLTAADLADPLLLREGREALDVLTRLLDLGSVYPFQQTGAADG.

Substrate is bound by residues 19 to 28 (AGLSFGNEAS), N110, and 137 to 138 (HR). E174 is an active-site residue. R212 is a binding site for substrate. Residue H248 is part of the active site. 2 residues coordinate substrate: D250 and N359. The Nucleophile role is filled by C365.

It belongs to the succinylarginine dihydrolase family. Homodimer.

The catalysed reaction is N(2)-succinyl-L-arginine + 2 H2O + 2 H(+) = N(2)-succinyl-L-ornithine + 2 NH4(+) + CO2. The protein operates within amino-acid degradation; L-arginine degradation via AST pathway; L-glutamate and succinate from L-arginine: step 2/5. Catalyzes the hydrolysis of N(2)-succinylarginine into N(2)-succinylornithine, ammonia and CO(2). The chain is N-succinylarginine dihydrolase from Salmonella heidelberg (strain SL476).